Here is a 251-residue protein sequence, read N- to C-terminus: B3 domain-containing protein At2g24670 (251 aa).

The disordered stretch occupies residues 48–111; it reads TTPSTVMESK…SSKTREPTPG (64 aa). Residues 56-70 show a composition bias toward basic and acidic residues; sequence SKSHIHDHSLRESPT. The segment at residues 153–249 is a DNA-binding region (TF-B3); sequence VSQIVELEFL…TLYFALVPLY (97 aa).

It localises to the nucleus. The polypeptide is B3 domain-containing protein At2g24670 (Arabidopsis thaliana (Mouse-ear cress)).